We begin with the raw amino-acid sequence, 1184 residues long: DNA-directed RNA polymerase subunit beta (1184 aa).

The tract at residues 1160–1184 (DDDFTNQNDAFNIVQPENAAAEKTE) is disordered.

It belongs to the RNA polymerase beta chain family. As to quaternary structure, the RNAP catalytic core consists of 2 alpha, 1 beta, 1 beta' and 1 omega subunit. When a sigma factor is associated with the core the holoenzyme is formed, which can initiate transcription.

It catalyses the reaction RNA(n) + a ribonucleoside 5'-triphosphate = RNA(n+1) + diphosphate. In terms of biological role, DNA-dependent RNA polymerase catalyzes the transcription of DNA into RNA using the four ribonucleoside triphosphates as substrates. The chain is DNA-directed RNA polymerase subunit beta from Listeria welshimeri serovar 6b (strain ATCC 35897 / DSM 20650 / CCUG 15529 / CIP 8149 / NCTC 11857 / SLCC 5334 / V8).